Consider the following 197-residue polypeptide: ADP-ribosylation factor-like protein 6-interacting protein 1 (197 aa).

A run of 4 helical transmembrane segments spans residues 43 to 63 (VVFGVISCLYLVLWYLDLSLI), 64 to 84 (TLLSLLGVISILLNYAFPMVS), 129 to 149 (TVFVIVMSLGLLAMAWIGAII), and 150 to 170 (NNLLLMYLATLLILMWPGLQN).

This sequence belongs to the ARL6ip family.

It localises to the membrane. This is ADP-ribosylation factor-like protein 6-interacting protein 1 from Drosophila melanogaster (Fruit fly).